A 329-amino-acid polypeptide reads, in one-letter code: DNA-directed RNA polymerase subunit alpha (329 aa).

The segment at 1-235 is alpha N-terminal domain (alpha-NTD); the sequence is MQGSVTEFLK…EQLEAFVDLR (235 aa). An alpha C-terminal domain (alpha-CTD) region spans residues 249-329; it reads FDPILLRPVD…NWPPASIADE (81 aa).

The protein belongs to the RNA polymerase alpha chain family. Homodimer. The RNAP catalytic core consists of 2 alpha, 1 beta, 1 beta' and 1 omega subunit. When a sigma factor is associated with the core the holoenzyme is formed, which can initiate transcription.

The catalysed reaction is RNA(n) + a ribonucleoside 5'-triphosphate = RNA(n+1) + diphosphate. Functionally, DNA-dependent RNA polymerase catalyzes the transcription of DNA into RNA using the four ribonucleoside triphosphates as substrates. The polypeptide is DNA-directed RNA polymerase subunit alpha (Yersinia pestis bv. Antiqua (strain Antiqua)).